We begin with the raw amino-acid sequence, 245 residues long: Vacuolar iron transporter (245 aa).

The Cytoplasmic segment spans residues 1 to 28; it reads MGEVGESEKYLLNRHKEHHFTAGETVRD. The helical transmembrane segment at 29–49 threads the bilayer; sequence IIIGFSDGLTVPFALAAGLSG. Residues 50–55 lie on the Vacuolar side of the membrane; sequence ANASSS. The helical transmembrane segment at 56–76 threads the bilayer; sequence IILTAGIAEVAAGAISMGLGG. Residues 77–162 are Cytoplasmic-facing; it reads YLAAKSEADH…PRRALQSALT (86 aa). Fe cation is bound by residues Glu-94, Glu-97, Glu-105, Glu-108, Met-141, and Glu-145. The chain crosses the membrane as a helical span at residues 163–183; that stretch reads IAISYVLSGLIPLLPYMFIPI. Residues 184 to 186 are Vacuolar-facing; it reads AQK. Residues 187 to 207 traverse the membrane as a helical segment; that stretch reads AVVSSVIVTIFALLIFGFAKG. Over 208–214 the chain is Cytoplasmic; the sequence is YFTGNKP. A helical membrane pass occupies residues 215–235; it reads VWSALQTALIGAIASAAAFGM. The Vacuolar segment spans residues 236 to 245; sequence AKGCASSVFE.

It belongs to the CCC1 family. As to expression, expressed in petal tissues, but not in other parts of the plant, such as leaves, roots, sepals and stems.

Its subcellular location is the vacuole membrane. It catalyses the reaction Fe(2+)(in) = Fe(2+)(out). Vacuolar iron transporter involved in the transfer of iron ions from the cytosol to the vacuole for intracellular iron storage. Plays an essential role in the development of blue coloration in cornflower petals. The protein is Vacuolar iron transporter of Centaurea cyanus (Garden cornflower).